A 2259-amino-acid chain; its full sequence is Putative Polycomb group protein ASXL3 (2259 aa).

The 74-residue stretch at 10-83 (RTWAEAARLA…KSGLYALRKE (74 aa)) folds into the HTH HARE-type domain. The tract at residues 181-230 (VVLTPLKVSDEQSDSPSGSESKNGEADSSDKEMKHGQKSPTGKQTSQHLK) is disordered. Residues 202–215 (KNGEADSSDKEMKH) show a composition bias toward basic and acidic residues. Polar residues predominate over residues 218–227 (KSPTGKQTSQ). Residues 253 to 362 (PGSILVNTNL…FERFYGERSG (110 aa)) enclose the DEUBAD domain. Disordered regions lie at residues 364–399 (SREE…AQNA), 607–643 (CISE…CTPA), 703–810 (EASP…IPEP), 857–1012 (SEMT…PLKI), 1025–1049 (SQPV…NTGA), 1126–1150 (RLPS…TKME), 1433–1462 (LSGE…GGFV), 1614–1643 (DPMR…GLKA), 1687–1719 (DFPG…TTSP), and 1993–2075 (NMLS…TTKR). Composition is skewed to polar residues over residues 607–617 (CISETSFSSES), 630–643 (GETQ…CTPA), and 703–717 (EASP…SEAS). Residues 722 to 741 (LPPTSETSSESSMPLTSETP) are compositionally biased toward low complexity. Polar residues-rich tracts occupy residues 770–781 (KSPSGSEEANSP) and 926–945 (QSST…SEPS). Basic and acidic residues-rich tracts occupy residues 949 to 985 (DGIR…DDQS) and 995 to 1006 (PEKEQPPREEPR). Over residues 1034–1043 (RASTSTSVSS) the composition is skewed to low complexity. Residues 1437 to 1448 (NLDNNSGPLNRT) show a composition bias toward polar residues. Residues 1699 to 1719 (EVTSSASVQPTQTMKPSTTSP) show a composition bias toward polar residues. The segment covering 2023 to 2055 (PLPPPPPPPPPPPPPLALPPPPPPPPPLPPPLP) has biased composition (pro residues). A PHD-type; atypical zinc finger spans residues 2221–2258 (ELKCSCRLKAMIVCKGCGAFCHDDCIGPSKLCVACLVV).

Belongs to the Asx family. As to quaternary structure, core component of the polycomb repressive deubiquitinase (PR-DUB) complex, at least composed of BAP1, one of ASXL1, ASXL2 or (probably) ASXL3, and one of MBD5 or MBD6. Distinct combinations of ASXL and MBD proteins may preferentially bind specific histone modification marks. The PR-DUB core associates with a number of accessory proteins, including FOXK1, FOXK2, KDM1B, HCFC1 and OGT; KDM1B specifically associates with ASXL2 PR-DUB complexes. Interacts (via PHD domain) with MBD5 and MBD6 (via MBD domain); the interaction is probably direct and mediates association of MBD proteins with the PR-DUB core.

It is found in the nucleus. Putative Polycomb group (PcG) protein. PcG proteins act by forming multiprotein complexes, which are required to maintain the transcriptionally repressive state of homeotic genes throughout development. PcG proteins are not required to initiate repression, but to maintain it during later stages of development. They probably act via methylation of histones, rendering chromatin heritably changed in its expressibility. Non-catalytic component of the PR-DUB complex, a complex that specifically mediates deubiquitination of histone H2A monoubiquitinated at 'Lys-119' (H2AK119ub1). The PR-DUB complex is an epigenetic regulator of gene expression and acts as a transcriptional coactivator, affecting genes involved in development, cell communication, signaling, cell proliferation and cell viability. ASXL1, ASXL2 and ASXL3 function redundantly in the PR-DUB complex and are essential for chromatin recruitment and transcriptional activation of associated genes. The polypeptide is Putative Polycomb group protein ASXL3 (Asxl3) (Mus musculus (Mouse)).